We begin with the raw amino-acid sequence, 209 residues long: Uracil phosphoribosyltransferase (209 aa).

Residues R79, R104, and 131–139 (DPMLATGGS) contribute to the 5-phospho-alpha-D-ribose 1-diphosphate site. Uracil contacts are provided by residues I194 and 199–201 (GDA). D200 serves as a coordination point for 5-phospho-alpha-D-ribose 1-diphosphate.

It belongs to the UPRTase family. Requires Mg(2+) as cofactor.

The catalysed reaction is UMP + diphosphate = 5-phospho-alpha-D-ribose 1-diphosphate + uracil. Its pathway is pyrimidine metabolism; UMP biosynthesis via salvage pathway; UMP from uracil: step 1/1. Allosterically activated by GTP. Functionally, catalyzes the conversion of uracil and 5-phospho-alpha-D-ribose 1-diphosphate (PRPP) to UMP and diphosphate. This Streptococcus agalactiae serotype III (strain NEM316) protein is Uracil phosphoribosyltransferase.